Reading from the N-terminus, the 278-residue chain is Cation-dependent mannose-6-phosphate receptor (278 aa).

An N-terminal signal peptide occupies residues 1–21 (MFPLSGCWRTELLLLLLLAVA). Residues 22–188 (VRESWQIEEK…ACSPEVSHLS (167 aa)) are Lumenal-facing. The MRH domain maps to 31–182 (KSCDLVGEKD…EMDSSLACSP (152 aa)). A disulfide bond links Cys33 and Cys79. Asn58, Asn84, Asn95, Asn108, and Asn114 each carry an N-linked (GlcNAc...) asparagine glycan. Intrachain disulfides connect Cys133/Cys168 and Cys146/Cys180. Residues 189-209 (VGSILLVIFASLVAVYIIGGF) form a helical membrane-spanning segment. At 210–278 (LYQRLVVGAK…EERDDHLLPM (69 aa)) the chain is on the cytoplasmic side. Positions 256 to 278 (YRGVGDDQLGEESEERDDHLLPM) are disordered. Ser268 carries the phosphoserine modification.

Homodimer. Binds GGA1, GGA2 and GGA3.

The protein localises to the lysosome membrane. Transport of phosphorylated lysosomal enzymes from the Golgi complex and the cell surface to lysosomes. Lysosomal enzymes bearing phosphomannosyl residues bind specifically to mannose-6-phosphate receptors in the Golgi apparatus and the resulting receptor-ligand complex is transported to an acidic prelyosomal compartment where the low pH mediates the dissociation of the complex. The protein is Cation-dependent mannose-6-phosphate receptor (M6pr) of Rattus norvegicus (Rat).